A 377-amino-acid polypeptide reads, in one-letter code: Naringenin,2-oxoglutarate 3-dioxygenase (377 aa).

Positions 193 to 297 (CVDMDQKVVV…RLSIATFQNP (105 aa)) constitute a Fe2OG dioxygenase domain. His220, Asp222, and His278 together coordinate Fe cation. 2-oxoglutarate is bound at residue Arg288.

This sequence belongs to the iron/ascorbate-dependent oxidoreductase family. The cofactor is Fe(2+). Requires L-ascorbate as cofactor.

The catalysed reaction is a (2S)-flavan-4-one + 2-oxoglutarate + O2 = a (2R,3R)-dihydroflavonol + succinate + CO2. It participates in secondary metabolite biosynthesis; flavonoid biosynthesis. Functionally, catalyzes the 3-beta-hydroxylation of 2S-flavanones to 2R,3R-dihydroflavonols which are intermediates in the biosynthesis of flavonols, anthocyanidins, catechins and proanthocyanidins in plants. The sequence is that of Naringenin,2-oxoglutarate 3-dioxygenase from Hordeum vulgare (Barley).